Reading from the N-terminus, the 441-residue chain is Transcription factor bHLH90 (441 aa).

The bHLH domain maps to 260–309; sequence NFKSKNLHSERKRRERINQAMYGLRAVVPKITKLNKIGIFSDAVDYINEL.

As to quaternary structure, homodimer. In terms of tissue distribution, expressed constitutively in roots, leaves, stems, and flowers.

Its subcellular location is the nucleus. This Arabidopsis thaliana (Mouse-ear cress) protein is Transcription factor bHLH90 (BHLH90).